Here is a 188-residue protein sequence, read N- to C-terminus: dCTP deaminase (188 aa).

109 to 114 (KSTYAR) provides a ligand contact to dCTP. The Proton donor/acceptor role is filled by Glu135. DCTP-binding residues include Gln154, Tyr168, and Gln178.

Belongs to the dCTP deaminase family. As to quaternary structure, homotrimer.

It catalyses the reaction dCTP + H2O + H(+) = dUTP + NH4(+). Its pathway is pyrimidine metabolism; dUMP biosynthesis; dUMP from dCTP (dUTP route): step 1/2. Catalyzes the deamination of dCTP to dUTP. The polypeptide is dCTP deaminase (Helicobacter pylori (strain P12)).